The following is a 337-amino-acid chain: Protein XAP5 CIRCADIAN TIMEKEEPER (337 aa).

Serine 2 is modified (N-acetylserine). Coiled-coil stretches lie at residues 13–41 and 72–121; these read QDAVRIRRLQKQREAERKKIQELKSKSAS and TREE…GSSR. Residues 23-37 show a composition bias toward basic and acidic residues; the sequence is KQREAERKKIQELKS. Residues 23 to 47 form a disordered region; it reads KQREAERKKIQELKSKSASGNDQSG. The segment covering 38–47 has biased composition (polar residues); the sequence is KSASGNDQSG. Residues 125 to 174 form a disordered region; the sequence is AEDFENGSDEDDGENKSSGTGNLRCGKLGKDPSVETNFLPDSEREAEEQA. Acidic residues predominate over residues 126 to 137; sequence EDFENGSDEDDG. Serine 132 carries the post-translational modification Phosphoserine. Residues 165–174 are compositionally biased toward basic and acidic residues; it reads DSEREAEEQA.

Belongs to the FAM50 family. In terms of tissue distribution, expressed in leaves stems, flowers, roots, trichomes and hypocotyls.

It is found in the nucleus. In terms of biological role, involved in light regulation of the circadian clock and photomorphogenesis. May play a global role in coordinating growth in response to the light environment. Acts as a light quality sensor directing both negative and positive transcriptional regulation. Inhibits growth in red light but promote growth in blue light. Inhibits clock gene expression in diurnal cycles. Plays no role in the control of flowering time. The polypeptide is Protein XAP5 CIRCADIAN TIMEKEEPER (XCT) (Arabidopsis thaliana (Mouse-ear cress)).